Reading from the N-terminus, the 156-residue chain is Small ribosomal subunit protein uS7 (156 aa).

The protein belongs to the universal ribosomal protein uS7 family. Part of the 30S ribosomal subunit. Contacts proteins S9 and S11.

In terms of biological role, one of the primary rRNA binding proteins, it binds directly to 16S rRNA where it nucleates assembly of the head domain of the 30S subunit. Is located at the subunit interface close to the decoding center, probably blocks exit of the E-site tRNA. The chain is Small ribosomal subunit protein uS7 from Salinispora arenicola (strain CNS-205).